The following is a 467-amino-acid chain: MHSLSLISLALLSPLLVNAQLSGHVGPLTSSSSKASTKTCNVQDYGAKADKETDIGSAIEKAWDDCAEGGVVYIPSGDYAMFSRLKLSGGKASAIQLDGIIYRTGSDGGNLFMIEHSSDFEFFSSTSQGAIQGLGYEFHKDGSLNGPRLLRFYDVTDFSVHDVALVDSPAFHLSLDTCKNAEIYNMAIRGGDSGGLDGVDIWSENVWVHDVEVTNKDECVTVKSPAKNILVENIYCNWSGGCAMGSLGADTNISDVVYRNVYTWKSNQMYMIKSNGGSGSVSNLVLENFIGHGNAYSLDIDGEWSSMSTVSGDGVQLNNITVRNWKGTEEDGAARGPIKVVCAEKAPCTDITIDDFALWTESGDEQTYSCENGFGSGFCLQDGDGTSSYSTVITETAAPTGYEASSMSNDLSTAFGTDASIPIPTIPTSFFPGATPYSALAGAASGNAAKATSSATASRFRHRRGSH.

Positions 1–19 (MHSLSLISLALLSPLLVNA) are cleaved as a signal peptide. Cys40 and Cys66 form a disulfide bridge. The active-site Proton donor is the Asp217. A disulfide bridge links Cys219 with Cys236. N-linked (GlcNAc...) asparagine glycosylation is found at Asn237 and Asn252. Residue His292 is part of the active site. Asn319 carries an N-linked (GlcNAc...) asparagine glycan. 2 cysteine pairs are disulfide-bonded: Cys342-Cys348 and Cys370-Cys379.

It belongs to the glycosyl hydrolase 28 family.

It localises to the secreted. It carries out the reaction Endohydrolysis of alpha-D-GalA-(1-&gt;2)-alpha-L-Rha glycosidic bond in the rhamnogalacturonan I backbone with initial inversion of anomeric configuration releasing oligosaccharides with beta-D-GalA at the reducing end.. Its function is as follows. Pectinolytic enzymes consist of four classes of enzymes: pectine lyase, polygalacturonase, pectin methylesterase and rhamnogalacturonase. Hydrolyzes alpha-D-galacturonopyranosyl-(1,2)-alpha-L-rhamnopyranosyl linkages in the backbone of the hairy regions of pectins. The chain is Probable rhamnogalacturonase A (rhgA) from Aspergillus oryzae (strain ATCC 42149 / RIB 40) (Yellow koji mold).